Here is a 171-residue protein sequence, read N- to C-terminus: CDP-archaeol synthase (171 aa).

Helical transmembrane passes span M7–L27, F55–A75, V84–I104, P115–V135, and G141–A161.

Belongs to the CDP-archaeol synthase family. Requires Mg(2+) as cofactor.

It is found in the cell membrane. The enzyme catalyses 2,3-bis-O-(geranylgeranyl)-sn-glycerol 1-phosphate + CTP + H(+) = CDP-2,3-bis-O-(geranylgeranyl)-sn-glycerol + diphosphate. The protein operates within membrane lipid metabolism; glycerophospholipid metabolism. Its function is as follows. Catalyzes the formation of CDP-2,3-bis-(O-geranylgeranyl)-sn-glycerol (CDP-archaeol) from 2,3-bis-(O-geranylgeranyl)-sn-glycerol 1-phosphate (DGGGP) and CTP. This reaction is the third ether-bond-formation step in the biosynthesis of archaeal membrane lipids. This is CDP-archaeol synthase from Thermococcus gammatolerans (strain DSM 15229 / JCM 11827 / EJ3).